A 225-amino-acid polypeptide reads, in one-letter code: Putative amino-acid transporter YggA (225 aa).

Helical transmembrane passes span 1–21 (MFAT…PIGA), 37–57 (LLTA…GVFG), 65–85 (SPIG…WFGI), 116–136 (LGVT…LGSF), and 150–170 (AVAM…AVVL).

This sequence belongs to the LysE/ArgO transporter (TC 2.A.75) family.

It localises to the cell membrane. The chain is Putative amino-acid transporter YggA from Aeromonas hydrophila.